The chain runs to 361 residues: tRNA-specific 2-thiouridylase MnmA (361 aa).

ATP-binding positions include 8-15 (AMSGGVDS) and Met35. Positions 95 to 97 (NPD) are interaction with target base in tRNA. The active-site Nucleophile is Cys100. Residues Cys100 and Cys196 are joined by a disulfide bond. ATP is bound at residue Gly124. Residues 146–148 (KDQ) are interaction with tRNA. Cys196 (cysteine persulfide intermediate) is an active-site residue. The interaction with tRNA stretch occupies residues 303–304 (RY).

Belongs to the MnmA/TRMU family.

It localises to the cytoplasm. The catalysed reaction is S-sulfanyl-L-cysteinyl-[protein] + uridine(34) in tRNA + AH2 + ATP = 2-thiouridine(34) in tRNA + L-cysteinyl-[protein] + A + AMP + diphosphate + H(+). In terms of biological role, catalyzes the 2-thiolation of uridine at the wobble position (U34) of tRNA, leading to the formation of s(2)U34. The polypeptide is tRNA-specific 2-thiouridylase MnmA (Chlamydia felis (strain Fe/C-56) (Chlamydophila felis)).